The primary structure comprises 479 residues: Sulfate adenylyltransferase subunit 1 (479 aa).

The 215-residue stretch at 25 to 239 (KSLLRFLTCG…EVLETVDIQR (215 aa)) folds into the tr-type G domain. The interval 34-41 (GSVDDGKS) is G1. Position 34–41 (34–41 (GSVDDGKS)) interacts with GTP. The segment at 92–96 (GITID) is G2. The G3 stretch occupies residues 113–116 (DTPG). GTP-binding positions include 113 to 117 (DTPGH) and 168 to 171 (NKMD). Residues 168–171 (NKMD) are G4. The tract at residues 206–208 (SAL) is G5.

It belongs to the TRAFAC class translation factor GTPase superfamily. Classic translation factor GTPase family. CysN/NodQ subfamily. As to quaternary structure, heterodimer composed of CysD, the smaller subunit, and CysN.

It catalyses the reaction sulfate + ATP + H(+) = adenosine 5'-phosphosulfate + diphosphate. It functions in the pathway sulfur metabolism; hydrogen sulfide biosynthesis; sulfite from sulfate: step 1/3. Its function is as follows. With CysD forms the ATP sulfurylase (ATPS) that catalyzes the adenylation of sulfate producing adenosine 5'-phosphosulfate (APS) and diphosphate, the first enzymatic step in sulfur assimilation pathway. APS synthesis involves the formation of a high-energy phosphoric-sulfuric acid anhydride bond driven by GTP hydrolysis by CysN coupled to ATP hydrolysis by CysD. This is Sulfate adenylyltransferase subunit 1 from Salmonella typhi.